A 510-amino-acid polypeptide reads, in one-letter code: ATP synthase subunit alpha (510 aa).

ATP is bound at residue 169–176 (GDRQTGKT).

It belongs to the ATPase alpha/beta chains family. As to quaternary structure, F-type ATPases have 2 components, CF(1) - the catalytic core - and CF(0) - the membrane proton channel. CF(1) has five subunits: alpha(3), beta(3), gamma(1), delta(1), epsilon(1). CF(0) has four main subunits: a(1), b(1), b'(1) and c(9-12).

It is found in the cell inner membrane. It catalyses the reaction ATP + H2O + 4 H(+)(in) = ADP + phosphate + 5 H(+)(out). In terms of biological role, produces ATP from ADP in the presence of a proton gradient across the membrane. The alpha chain is a regulatory subunit. This chain is ATP synthase subunit alpha, found in Rhodospirillum rubrum (strain ATCC 11170 / ATH 1.1.1 / DSM 467 / LMG 4362 / NCIMB 8255 / S1).